The chain runs to 689 residues: Glycine--tRNA ligase beta subunit (689 aa).

It belongs to the class-II aminoacyl-tRNA synthetase family. Tetramer of two alpha and two beta subunits.

Its subcellular location is the cytoplasm. The enzyme catalyses tRNA(Gly) + glycine + ATP = glycyl-tRNA(Gly) + AMP + diphosphate. This is Glycine--tRNA ligase beta subunit from Escherichia coli O7:K1 (strain IAI39 / ExPEC).